A 758-amino-acid polypeptide reads, in one-letter code: POU domain, class 2, transcription factor 1 (758 aa).

Polar residues-rich tracts occupy residues Met1–Gln10, Arg19–Pro30, and Val275–Pro285. 5 disordered regions span residues Met1–Gly43, Ala271–Pro296, Thr377–Lys398, Glu450–Ser472, and Ser534–Ser573. The POU-specific domain occupies Glu294–Glu368. Residues Arg395–Asn454 constitute a DNA-binding region (homeobox). Over residues Pro455 to Ser472 the composition is skewed to low complexity.

Belongs to the POU transcription factor family. Class-2 subfamily. In terms of tissue distribution, expressed in oocytes (at protein level). Expressed in the tadpole brain (at protein level).

The protein resides in the cytoplasm. Its subcellular location is the nucleus. Transcription factor that binds to the octamer motif (5'-ATTTGCAT-3') and activates the promoters of the genes of some small nuclear RNAs (snRNA) and histone H2B. In vitro does not bind to variant octamer sequences, such as the H2B octamer 5'-GTTTGCAT-3', although binding has been observed in vivo during early embryogenesis, suggesting that interactions between pou2f1 and other factors might be required for octamer-dependent H2B transcription. Acts downstream of Notch signaling during radial glia formation. May be important for gastrulation, possibly through the regulation of an FGF-type signaling pathway. The protein is POU domain, class 2, transcription factor 1 (pou2f1) of Xenopus laevis (African clawed frog).